Consider the following 79-residue polypeptide: Sulfur carrier protein TusA (79 aa).

The Cysteine persulfide intermediate role is filled by Cys17.

Belongs to the sulfur carrier protein TusA family.

Its subcellular location is the cytoplasm. In terms of biological role, sulfur carrier protein which probably makes part of a sulfur-relay system. This is Sulfur carrier protein TusA from Haemophilus influenzae (strain PittEE).